Reading from the N-terminus, the 557-residue chain is Urocanate hydratase (557 aa).

The segment at 1 to 20 (MSNPRHNEREVRSPRGDELN) is disordered. Residues 52-53 (GG), Q130, 176-178 (GMG), E196, R201, 242-243 (NA), 263-267 (QTSAH), 273-274 (YL), and Y322 contribute to the NAD(+) site. C410 is an active-site residue. G492 contacts NAD(+).

The protein belongs to the urocanase family. NAD(+) serves as cofactor.

The protein resides in the cytoplasm. It catalyses the reaction 4-imidazolone-5-propanoate = trans-urocanate + H2O. The protein operates within amino-acid degradation; L-histidine degradation into L-glutamate; N-formimidoyl-L-glutamate from L-histidine: step 2/3. Its function is as follows. Catalyzes the conversion of urocanate to 4-imidazolone-5-propionate. The sequence is that of Urocanate hydratase from Brucella abortus (strain S19).